The primary structure comprises 189 residues: UPF0149 protein VFMJ11_2207 (189 aa).

The protein belongs to the UPF0149 family.

The polypeptide is UPF0149 protein VFMJ11_2207 (Aliivibrio fischeri (strain MJ11) (Vibrio fischeri)).